A 186-amino-acid chain; its full sequence is Large ribosomal subunit protein eL15 (186 aa).

The interval Arg163–Arg186 is disordered. Residues Lys170–Gly179 show a composition bias toward basic residues.

It belongs to the eukaryotic ribosomal protein eL15 family.

In Methanosphaera stadtmanae (strain ATCC 43021 / DSM 3091 / JCM 11832 / MCB-3), this protein is Large ribosomal subunit protein eL15.